The primary structure comprises 157 residues: Capsid protein (157 aa).

Serine 2 carries the post-translational modification N-acetylserine; by host.

It belongs to the virgaviridae capsid protein family.

It is found in the virion. Functionally, capsid protein self-assembles to form rod-shaped virions about 18 nm in diameter with a central canal enclosing the viral genomic RNA. The chain is Capsid protein (CP) from Tomato mosaic virus (strain Korean) (ToMV).